A 329-amino-acid polypeptide reads, in one-letter code: Elongation factor Ts (329 aa).

An involved in Mg(2+) ion dislocation from EF-Tu region spans residues 79–82 (TDFV).

Belongs to the EF-Ts family.

The protein localises to the cytoplasm. Associates with the EF-Tu.GDP complex and induces the exchange of GDP to GTP. It remains bound to the aminoacyl-tRNA.EF-Tu.GTP complex up to the GTP hydrolysis stage on the ribosome. This Parabacteroides distasonis (strain ATCC 8503 / DSM 20701 / CIP 104284 / JCM 5825 / NCTC 11152) protein is Elongation factor Ts.